The primary structure comprises 220 residues: Translation initiation factor 6 (220 aa).

It belongs to the eIF-6 family.

Functionally, binds to the 50S ribosomal subunit and prevents its association with the 30S ribosomal subunit to form the 70S initiation complex. This Methanoculleus marisnigri (strain ATCC 35101 / DSM 1498 / JR1) protein is Translation initiation factor 6.